Reading from the N-terminus, the 223-residue chain is N-acetylmuramate alpha-1-phosphate uridylyltransferase (223 aa).

UTP contacts are provided by residues 11–13 (GER) and Lys-23. Asn-105 lines the substrate pocket. Asp-107 provides a ligand contact to Mg(2+). 2 residues coordinate substrate: Asp-140 and Asp-205. Asp-205 is a binding site for Mg(2+).

It belongs to the nucleotidyltransferase MurU family. Monomer. Mg(2+) is required as a cofactor.

The enzyme catalyses N-acetyl-alpha-D-muramate 1-phosphate + UDP + H(+) = UDP-N-acetyl-alpha-D-muramate + phosphate. Its pathway is cell wall biogenesis; peptidoglycan recycling. Is completely inhibited by EDTA in vitro. In terms of biological role, catalyzes the formation of UDP-N-acetylmuramate (UDP-MurNAc), a crucial precursor of the bacterial peptidoglycan cell wall, from UTP and MurNAc-alpha-1P. Is involved in peptidoglycan recycling as part of a cell wall recycling pathway that bypasses de novo biosynthesis of the peptidoglycan precursor UDP-MurNAc. Plays a role in intrinsic resistance to fosfomycin, which targets the de novo synthesis of UDP-MurNAc. Is not able to use GlcNAc-alpha-1P and GalNAc-alpha-1P as substrates. Cannot accept other nucleotide triphosphates (ATP, CTP, TTP, or GTP) than UTP. In Pseudomonas putida (strain ATCC 47054 / DSM 6125 / CFBP 8728 / NCIMB 11950 / KT2440), this protein is N-acetylmuramate alpha-1-phosphate uridylyltransferase.